The chain runs to 456 residues: tRNA-2-methylthio-N(6)-dimethylallyladenosine synthase (456 aa).

The 118-residue stretch at lysine 6 to arginine 123 folds into the MTTase N-terminal domain. The [4Fe-4S] cluster site is built by cysteine 15, cysteine 52, cysteine 86, cysteine 160, cysteine 164, and cysteine 167. The Radical SAM core domain maps to arginine 146–serine 380. In terms of domain architecture, TRAM spans glutamate 381 to glutamate 444.

This sequence belongs to the methylthiotransferase family. MiaB subfamily. Monomer. It depends on [4Fe-4S] cluster as a cofactor.

The protein resides in the cytoplasm. It carries out the reaction N(6)-dimethylallyladenosine(37) in tRNA + (sulfur carrier)-SH + AH2 + 2 S-adenosyl-L-methionine = 2-methylsulfanyl-N(6)-dimethylallyladenosine(37) in tRNA + (sulfur carrier)-H + 5'-deoxyadenosine + L-methionine + A + S-adenosyl-L-homocysteine + 2 H(+). Catalyzes the methylthiolation of N6-(dimethylallyl)adenosine (i(6)A), leading to the formation of 2-methylthio-N6-(dimethylallyl)adenosine (ms(2)i(6)A) at position 37 in tRNAs that read codons beginning with uridine. This Dichelobacter nodosus (strain VCS1703A) protein is tRNA-2-methylthio-N(6)-dimethylallyladenosine synthase.